The following is a 682-amino-acid chain: Zinc finger protein 16 (682 aa).

2 stretches are compositionally biased toward basic and acidic residues: residues 1–10 (MPSLRTRREE) and 113–125 (VSER…EGRR). Disordered regions lie at residues 1-33 (MPSL…HVSD) and 112-134 (DVSE…SQEG). The segment at 62–210 (YQQPDCDTRT…GVPTAESPLI (149 aa)) is necessary for transcription activation. The C2H2-type 1; degenerate zinc finger occupies 209–231 (LICNECGKTFQGNPDLIQCQIVH). The segment at 237–259 (FMCDDCGKTFSQNSVLKNHHRSH) adopts a C2H2-type 2; degenerate zinc-finger fold. A Glycyl lysine isopeptide (Lys-Gly) (interchain with G-Cter in SUMO2) cross-link involves residue Lys253. 8 consecutive C2H2-type zinc fingers follow at residues 265–287 (YQCS…QSHH), 293–315 (YMCN…QKSH), 321–343 (YECN…QRIH), 349–371 (YVCS…HRTH), 377–399 (FECG…QRVH), 405–427 (YECN…HRVH), 433–455 (YKCS…RRIH), and 461–483 (HVCN…QIIH). Required for nuclear localization regions lie at residues 268-393 (SECG…AHLR) and 341-373 (RIHS…THTG). A required for nuclear localization region spans residues 473 to 503 (SSVLRKHQIIHTGEKPYRCSVCGKAFSHSSA). The residue at position 487 (Lys487) is an N6-acetyllysine. 7 C2H2-type zinc fingers span residues 489–511 (YRCS…QGVH), 517–539 (YACH…QRVH), 545–567 (YECT…QRIH), 573–595 (HECN…QKVH), 601–623 (YTCV…QIIH), 629–651 (YKCS…QRIH), and 657–679 (YDCA…QLIH).

This sequence belongs to the krueppel C2H2-type zinc-finger protein family. In terms of assembly, interacts with INCA1; the interaction inhibits INCA1 activity and induces the cell cycle process.

Its subcellular location is the nucleus. In terms of biological role, acts as a transcriptional activator. Promotes cell proliferation by facilitating the cell cycle phase transition from the S to G2/M phase. Involved in both the hemin- and phorbol myristate acetate (PMA)-induced erythroid and megakaryocytic differentiation, respectively. Also plays a role as an inhibitor of cell apoptosis. In Gorilla gorilla gorilla (Western lowland gorilla), this protein is Zinc finger protein 16 (ZNF16).